The chain runs to 35 residues: Photosystem II reaction center protein M (35 aa).

Residues 7–27 (GLLATILVILVPSIFLVILYV) traverse the membrane as a helical segment.

The protein belongs to the PsbM family. As to quaternary structure, PSII is composed of 1 copy each of membrane proteins PsbA, PsbB, PsbC, PsbD, PsbE, PsbF, PsbH, PsbI, PsbJ, PsbK, PsbL, PsbM, PsbT, PsbX, PsbY, PsbZ, Psb30/Ycf12, peripheral proteins PsbO, CyanoQ (PsbQ), PsbU, PsbV and a large number of cofactors. It forms dimeric complexes.

It is found in the cellular thylakoid membrane. Functionally, one of the components of the core complex of photosystem II (PSII). PSII is a light-driven water:plastoquinone oxidoreductase that uses light energy to abstract electrons from H(2)O, generating O(2) and a proton gradient subsequently used for ATP formation. It consists of a core antenna complex that captures photons, and an electron transfer chain that converts photonic excitation into a charge separation. This subunit is found at the monomer-monomer interface. The protein is Photosystem II reaction center protein M of Synechococcus sp. (strain JA-3-3Ab) (Cyanobacteria bacterium Yellowstone A-Prime).